We begin with the raw amino-acid sequence, 785 residues long: Hyperosmolality-gated Ca2+ permeable channel 1.7 (785 aa).

Residues 7 to 27 (IGLSAAINLLSAFAFLFAFAM) form a helical membrane-spanning segment. Residue Ser54 is modified to Phosphoserine. A run of 9 helical transmembrane segments spans residues 101–121 (IYLL…GVLV), 156–176 (FWAH…ILYM), 373–393 (LLTT…IAFV), 425–445 (FLPG…LMTM), 465–485 (YFWF…TAFQ), 510–530 (ATFF…AEIL), 582–602 (AVAP…YVVF), 628–648 (LIIC…TKKF), and 651–671 (VTAL…YCAG). The tract at residues 725–761 (VDEEESNPLVRTKRTSQGTTRYNSEASSSATTTPVAN) is disordered. Over residues 739–761 (TSQGTTRYNSEASSSATTTPVAN) the composition is skewed to polar residues.

It belongs to the CSC1 (TC 1.A.17) family. In terms of processing, phosphorylated and activated by BIK1.

The protein localises to the membrane. The enzyme catalyses Ca(2+)(in) = Ca(2+)(out). Calcium-permeable channel involved in plant stomatal immunity. This Arabidopsis thaliana (Mouse-ear cress) protein is Hyperosmolality-gated Ca2+ permeable channel 1.7.